Consider the following 53-residue polypeptide: uncharacterized protein (53 aa).

This is an uncharacterized protein from Homo sapiens (Human).